Here is a 215-residue protein sequence, read N- to C-terminus: Eukaryotic translation initiation factor 4E-1 (215 aa).

The segment at 1 to 35 is disordered; the sequence is MAEDTETRPASAGAEEREEGEIADDGDGSAAAAAG. Acidic residues predominate over residues 16–27; it reads EREEGEIADDGD. EIF4G-binding regions lie at residues 40 to 43 and 50 to 86; these read HPLE and FDNPQGKSRAVAWGSTIHPIHTFSTVEDFWSLYNNIH. MRNA is bound by residues 58-63, lysine 90, and 108-109; these read RAVAWG and WE. The cysteines at positions 113 and 151 are disulfide-linked. The interval 134-143 is EIF4G-binding; sequence HTLLALIGEQ. Residues 158–163 and 203–207 each bind mRNA; these read RKNQER and KRSDK.

The protein belongs to the eukaryotic initiation factor 4E family. In terms of assembly, EIF4F is a multi-subunit complex, the composition of which varies with external and internal environmental conditions. It is composed of at least EIF4A, EIF4E and EIF4G. EIF4E is also known to interact with other partners. In higher plants two isoforms of EIF4F have been identified, named isoform EIF4F and isoform EIF(iso)4F. Isoform EIF4F has subunits p220 and p26, whereas isoform EIF(iso)4F has subunits p82 and p28. (Microbial infection) Interacts with potyvirus viral genome-linked protein (VPg); this interaction is possible in susceptible hosts but impaired in resistant plants. Post-translationally, according to the redox status, the Cys-113-Cys-151 disulfide bridge may have a role in regulating protein function by affecting its ability to bind capped mRNA.

Its subcellular location is the nucleus. It is found in the cytoplasm. Component of the protein complex eIF4F, which is involved in the recognition of the mRNA cap, ATP-dependent unwinding of 5'-terminal secondary structure and recruitment of mRNA to the ribosome. Recognizes and binds the 7-methylguanosine-containing mRNA cap during an early step in the initiation of protein synthesis and facilitates ribosome binding by inducing the unwinding of the mRNAs secondary structures. Key component of recessive resistance to potyviruses and bymoviruses, including barley yellow mosaic virus and barley mild mosaic virus. Its function is as follows. (Microbial infection) Susceptibility host factor required for viral infection by recruiting viral RNAs to the host ribosomal complex via an interaction with viral genome-linked protein (VPg). The polypeptide is Eukaryotic translation initiation factor 4E-1 (Hordeum vulgare subsp. vulgare (Domesticated barley)).